Reading from the N-terminus, the 75-residue chain is Porwaprin-b (75 aa).

A signal peptide spans 1-24 (MSSGGLLLLLGLLTLWAELTPVSG). In terms of domain architecture, WAP spans 27 to 72 (RPVKPGLCPPRPQKPPCVKECKNDWSCRGEQKCCHYGCIYECRDPI). 4 disulfide bridges follow: Cys34/Cys60, Cys43/Cys64, Cys47/Cys59, and Cys53/Cys68.

It belongs to the venom waprin family. In terms of tissue distribution, expressed by the venom gland.

It localises to the secreted. Damages membranes of susceptible bacteria. Has no hemolytic activity. Not toxic to mice. Does not inhibit the proteinases elastase and cathepsin G. This Pseudechis porphyriacus (Red-bellied black snake) protein is Porwaprin-b.